A 294-amino-acid polypeptide reads, in one-letter code: NAD kinase (294 aa).

Residue Asp-74 is the Proton acceptor of the active site. NAD(+) contacts are provided by residues 74–75, Arg-79, 149–150, Asp-179, 190–195, and Ala-214; these read DG, NE, and TGYSMS.

It belongs to the NAD kinase family. It depends on a divalent metal cation as a cofactor.

The protein resides in the cytoplasm. The enzyme catalyses NAD(+) + ATP = ADP + NADP(+) + H(+). Involved in the regulation of the intracellular balance of NAD and NADP, and is a key enzyme in the biosynthesis of NADP. Catalyzes specifically the phosphorylation on 2'-hydroxyl of the adenosine moiety of NAD to yield NADP. The protein is NAD kinase of Flavobacterium psychrophilum (strain ATCC 49511 / DSM 21280 / CIP 103535 / JIP02/86).